The chain runs to 511 residues: Bifunctional purine biosynthesis protein PurH (511 aa).

The region spanning 1-145 (MKKRALVSVS…KNHKFVSVIV (145 aa)) is the MGS-like domain.

Belongs to the PurH family.

It carries out the reaction (6R)-10-formyltetrahydrofolate + 5-amino-1-(5-phospho-beta-D-ribosyl)imidazole-4-carboxamide = 5-formamido-1-(5-phospho-D-ribosyl)imidazole-4-carboxamide + (6S)-5,6,7,8-tetrahydrofolate. The catalysed reaction is IMP + H2O = 5-formamido-1-(5-phospho-D-ribosyl)imidazole-4-carboxamide. It functions in the pathway purine metabolism; IMP biosynthesis via de novo pathway; 5-formamido-1-(5-phospho-D-ribosyl)imidazole-4-carboxamide from 5-amino-1-(5-phospho-D-ribosyl)imidazole-4-carboxamide (10-formyl THF route): step 1/1. Its pathway is purine metabolism; IMP biosynthesis via de novo pathway; IMP from 5-formamido-1-(5-phospho-D-ribosyl)imidazole-4-carboxamide: step 1/1. The protein is Bifunctional purine biosynthesis protein PurH of Bacillus cereus (strain B4264).